Reading from the N-terminus, the 184-residue chain is Putative manganese efflux pump MntP (184 aa).

The next 5 membrane-spanning stretches (helical) occupy residues 39–59 (IFGV…LSFV), 65–85 (IDHF…ILEA), 102–122 (LALG…TFSF), 132–152 (LIIG…GKIL), and 161–181 (LVLG…THLV).

The protein belongs to the MntP (TC 9.B.29) family.

The protein resides in the cell inner membrane. Its function is as follows. Probably functions as a manganese efflux pump. The sequence is that of Putative manganese efflux pump MntP from Campylobacter curvus (strain 525.92).